The primary structure comprises 125 residues: MPTVQQLVRSARQKITTKTKSPALKSCPQRRGVCTRVYTTTPKKPNSALRKVARVRLTSGFEVTAYIPGIGHNLQEHSVVLVRGGKVKDLPGVRYHVVRGTLDTAGVKGRVNGRSKYGVKRPSDS.

It belongs to the universal ribosomal protein uS12 family. As to quaternary structure, part of the 30S ribosomal subunit.

The protein localises to the plastid. It localises to the chloroplast. In terms of biological role, with S4 and S5 plays an important role in translational accuracy. Located at the interface of the 30S and 50S subunits. The polypeptide is Small ribosomal subunit protein uS12c (rps12) (Oltmannsiellopsis viridis (Marine flagellate)).